The following is a 755-amino-acid chain: Ligand-dependent nuclear receptor-interacting factor 1 (755 aa).

Residue Lys-270 forms a Glycyl lysine isopeptide (Lys-Gly) (interchain with G-Cter in SUMO2) linkage. A phosphoserine mark is found at Ser-391, Ser-419, and Ser-425. Lys-436 participates in a covalent cross-link: Glycyl lysine isopeptide (Lys-Gly) (interchain with G-Cter in SUMO2). The PxVxL motif motif lies at 565–569; the sequence is LRVCL. The residue at position 584 (Ser-584) is a Phosphoserine. Lys-590 participates in a covalent cross-link: Glycyl lysine isopeptide (Lys-Gly) (interchain with G-Cter in SUMO2). Short sequence motifs (nuclear localization signal) lie at residues 612–615 and 625–628; these read KKRK and KKIK. Residues 665–698 are disordered; it reads IVTSHSTTREDKRTEAEHCSHEKQEKGTLSSSTS. Residues 671–690 are compositionally biased toward basic and acidic residues; sequence TTREDKRTEAEHCSHEKQEK. The stretch at 678–711 forms a coiled coil; it reads TEAEHCSHEKQEKGTLSSSTSFEQSTFLNKNFME. Residue Lys-687 forms a Glycyl lysine isopeptide (Lys-Gly) (interchain with G-Cter in SUMO2) linkage. Position 717 is a phosphothreonine (Thr-717).

Belongs to the LRIF1 family. In terms of assembly, interacts with RARA. Interacts with SMCHD1; leading to recruitment to inactivated chromosome X in females. Interacts (via PxVxL motif) with HP1 (CBX1/HP1-beta, CBX3/HP1-gamma and CBX5/HP1-alpha).

Its subcellular location is the chromosome. The protein resides in the nucleus matrix. Functionally, together with SMCHD1, involved in chromosome X inactivation in females by promoting the compaction of heterochromatin. Also able to repress the ligand-induced transcriptional activity of retinoic acid receptor alpha (RARA), possibly through direct recruitment of histone deacetylases. This Mus musculus (Mouse) protein is Ligand-dependent nuclear receptor-interacting factor 1 (Lrif1).